We begin with the raw amino-acid sequence, 117 residues long: Large ribosomal subunit protein uL18 (117 aa).

The protein belongs to the universal ribosomal protein uL18 family. As to quaternary structure, part of the 50S ribosomal subunit; part of the 5S rRNA/L5/L18/L25 subcomplex. Contacts the 5S and 23S rRNAs.

Its function is as follows. This is one of the proteins that bind and probably mediate the attachment of the 5S RNA into the large ribosomal subunit, where it forms part of the central protuberance. This chain is Large ribosomal subunit protein uL18, found in Aliivibrio fischeri (strain MJ11) (Vibrio fischeri).